The sequence spans 180 residues: Adipocyte-related X-chromosome expressed sequence 1 (180 aa).

At 1–11 (MNSLLSRANSL) the chain is on the cytoplasmic side. A helical; Signal-anchor for type II membrane protein membrane pass occupies residues 12–32 (FAFTLSVMAALTLGCILTTAF). Topologically, residues 33 to 180 (KDRSAPVRLH…PDSYEIATTF (148 aa)) are lumenal. Asparagine 141 carries N-linked (GlcNAc...) asparagine glycosylation.

It belongs to the SPCS3 family. Strongly expressed in epididymal white and brown adipose tissue with low levels in heart.

The protein localises to the endoplasmic reticulum membrane. Its function is as follows. Plays a role in adipogenesis. The chain is Adipocyte-related X-chromosome expressed sequence 1 from Mus musculus (Mouse).